The primary structure comprises 381 residues: MMKKSICCALLLTASFSTFAAAKTEQQIADIVNRTITPLMQEQAIPGMAVAIIYEGKPYYFTWGKADIANNHPVTQQTLFELGSVSKTFNGVLGGDRIARGEIKLSDPVTKYWPELTGKQWRGISLLHLATYTAGGLPLQIPGDVTDKAELLRFYQNWQPQWTPGAKRLYANSSIGLFGALAVKSSGMSYEEAMTRRVLQPLKLAHTWITVPQSEQKNYAWGYLEGKPVHVSPGQLDAEAYGVKSSVIDMARWVQANMDASHVQEKTLQQGIELAQSRYWRIGDMYQGLGWEMLNWPLKADSIINGSDSKVALAALPAVEVNPPAPAVKASWVHKTGSTGGFGSYVAFVPEKNLGIVMLANKSYPNPARVEAAWRILEKLQ.

A signal peptide spans 1–20 (MMKKSICCALLLTASFSTFA). The Acyl-ester intermediate role is filled by S84. The Proton acceptor role is filled by Y170. 335–337 (KTG) contributes to the substrate binding site.

This sequence belongs to the class-C beta-lactamase family.

The protein localises to the periplasm. The catalysed reaction is a beta-lactam + H2O = a substituted beta-amino acid. With respect to regulation, sulbactam is an effective progressive inhibitor but a poor competitive inhibitor. Its function is as follows. This protein is a serine beta-lactamase with a substrate specificity for cephalosporins. The chain is Beta-lactamase (ampC) from Citrobacter freundii.